The chain runs to 298 residues: tRNA dimethylallyltransferase (298 aa).

10–17 contributes to the ATP binding site; that stretch reads GPTASGKT. 12–17 provides a ligand contact to substrate; sequence TASGKT. Residues 35-38 are interaction with substrate tRNA; the sequence is DSMC.

The protein belongs to the IPP transferase family. Monomer. Mg(2+) serves as cofactor.

It catalyses the reaction adenosine(37) in tRNA + dimethylallyl diphosphate = N(6)-dimethylallyladenosine(37) in tRNA + diphosphate. Functionally, catalyzes the transfer of a dimethylallyl group onto the adenine at position 37 in tRNAs that read codons beginning with uridine, leading to the formation of N6-(dimethylallyl)adenosine (i(6)A). The chain is tRNA dimethylallyltransferase from Hydrogenobaculum sp. (strain Y04AAS1).